The sequence spans 436 residues: Glutamate-1-semialdehyde 2,1-aminomutase (436 aa).

N6-(pyridoxal phosphate)lysine is present on Lys-270.

It belongs to the class-III pyridoxal-phosphate-dependent aminotransferase family. HemL subfamily. As to quaternary structure, homodimer. Pyridoxal 5'-phosphate serves as cofactor.

Its subcellular location is the cytoplasm. The catalysed reaction is (S)-4-amino-5-oxopentanoate = 5-aminolevulinate. It functions in the pathway porphyrin-containing compound metabolism; protoporphyrin-IX biosynthesis; 5-aminolevulinate from L-glutamyl-tRNA(Glu): step 2/2. In Cutibacterium acnes (strain DSM 16379 / KPA171202) (Propionibacterium acnes), this protein is Glutamate-1-semialdehyde 2,1-aminomutase.